The following is an 872-amino-acid chain: MSLYRSPSAALLKSPSQAAFGAPFGSMSVADLGSLTRLEDKIRLLQEDLESERELRNRVERERADLSVQVIALTDRLEDAEGTTDSQIESNRKREGELSKLRKLLEESQLESEDAMNVLRKKHQDSCLDYQDQIEQLQKKNAKIDRERQRVQHEVIELTATIDQLQKDKHTAEKAAERFEAQANELANKVEDLNKHVNDLAQQRQRLQAENNDLLKEVHDQKVQLDNLQHVKYTLAQQLEEARRRLEDAERERSQLQSQLHQVQLELDSVRTALDEESIARSDAEHKLNLANTEITQWKSKFDAEVALHHEEVEDLRKKMLQKQAEYEEQIEIMLQKISQLEKAKSRLQSEVEVLIVDLEKAQNTIALLERAREQLERQVGELKVRIDEITVELEAAQRELRAVNAELQKMKHLYEKAVEQKEALARENKKLHDELHEAKEALADANRKLHELDLENARLAGEIRELQTALKEADAQRRDAENRAQRALAELQALRIEMERRLQEKEEEMEALRKNLQFEIDRLIAALADAEARMKSEISRLKKKYQAEIAELEMTVDNLNRANIEAQKTIKKQSEQLKILQASLEDTQRQLQQVLDQYALAQRKVAALSAELEECKTALDNAIRARKQAEVDLEEANGRISDLISINNNLTSIKNKLETELSTAQADLDEVTKELHAADERANRALADAARAVEQLHEEQEHSMKIDALRKSLEEQVKQLQVQIQEAEAAALLGGKRVIAKLETRIRDLETALDEETRRHKETQNALRKKDRRIKEVQQLVDEEHKNFVMAQDTADRLTEKLNIQKRQLAESESVTMQNLQRVRRYQHELEDAEGRADQAESSLHLIRAKHRSSVVTGKSSSKIFVTEDDY.

The segment at M1 to D31 is nonhelical region. Positions L32–K851 form a coiled coil. Positions E294–L376 are interaction with unc-89. The nonhelical region stretch occupies residues V856–F866.

The protein belongs to the paramyosin family. Homodimer. May interact with unc-89 (via SH3 domain). In terms of processing, phosphorylated on serine residues in the N-terminal non-helical region. As to expression, expressed in body wall muscles of larvae and adults (at protein level). Expressed in gonadal myoepithelial sheath cells (at protein level).

Its subcellular location is the cytoplasm. It is found in the myofibril. The protein resides in the sarcomere. The protein localises to the a band. In terms of biological role, structural component of the muscle thick filaments which is involved in assembly and organization of sarcomere myofilaments. Involved in ovulation. Plays a role in the formation of muscle connections, also called muscle arm extensions, between the body wall and the motor axons in the dorsal and ventral cord. In Caenorhabditis elegans, this protein is Paramyosin (unc-15).